A 217-amino-acid polypeptide reads, in one-letter code: Protein DJ-1alpha (217 aa).

The Nucleophile role is filled by Cys-133. Cysteine sulfinic acid (-SO2H); alternate is present on Cys-133.

Expressed in testis (at protein level).

Its subcellular location is the cytoplasm. The protein localises to the nucleus. It localises to the mitochondrion. Plays an important role in cell protection against oxidative stress and cell death acting as oxidative stress sensor. Does not play a role in methylglyoxal detoxification. In Drosophila melanogaster (Fruit fly), this protein is Protein DJ-1alpha.